The following is a 461-amino-acid chain: Putative cytochrome P450 132 (461 aa).

Residue Cys-409 coordinates heme.

It belongs to the cytochrome P450 family. Heme serves as cofactor.

The chain is Putative cytochrome P450 132 (cyp132) from Mycobacterium tuberculosis (strain ATCC 25618 / H37Rv).